Consider the following 90-residue polypeptide: Putative F-box protein At5g16285 (90 aa).

The F-box domain maps to 1–46 (MRIESLLQHDVVERILERLAVNSLPRFKAVSKQWKSTIESQFFQGK).

This chain is Putative F-box protein At5g16285, found in Arabidopsis thaliana (Mouse-ear cress).